The primary structure comprises 496 residues: UDP-glycosyltransferase 73C2 (496 aa).

Residues serine 297, 357–359, 374–382, and 396–399 contribute to the UDP-alpha-D-glucose site; these read SPQ, HCGWNSTLE, and FGDQ.

Belongs to the UDP-glycosyltransferase family.

This is UDP-glycosyltransferase 73C2 (UGT73C2) from Arabidopsis thaliana (Mouse-ear cress).